A 370-amino-acid polypeptide reads, in one-letter code: Peptidoglycan glycosyltransferase MrdB (370 aa).

9 helical membrane passes run 20-40, 50-70, 75-95, 136-156, 160-180, 183-203, 263-283, 312-332, and 336-356; these read MLLILLALLVYSALVIWSASG, IGQIAMGLVIMVVMAQIPPRV, APYLYIICIILLVAVDAFGAI, SLKNTGIALVLIFMPTLLVAA, LGTSILVALSGLFVLFLSGLS, LIGVAVVLVAAFIPILWFFLM, FIFAVLAEELGLVGILILLAL, LILFVYVFVNIGMVSGILPVV, and LPLVSYGGSALIVLMAGFGIV.

The protein belongs to the SEDS family. MrdB/RodA subfamily.

It is found in the cell inner membrane. The enzyme catalyses [GlcNAc-(1-&gt;4)-Mur2Ac(oyl-L-Ala-gamma-D-Glu-L-Lys-D-Ala-D-Ala)](n)-di-trans,octa-cis-undecaprenyl diphosphate + beta-D-GlcNAc-(1-&gt;4)-Mur2Ac(oyl-L-Ala-gamma-D-Glu-L-Lys-D-Ala-D-Ala)-di-trans,octa-cis-undecaprenyl diphosphate = [GlcNAc-(1-&gt;4)-Mur2Ac(oyl-L-Ala-gamma-D-Glu-L-Lys-D-Ala-D-Ala)](n+1)-di-trans,octa-cis-undecaprenyl diphosphate + di-trans,octa-cis-undecaprenyl diphosphate + H(+). It functions in the pathway cell wall biogenesis; peptidoglycan biosynthesis. Functionally, peptidoglycan polymerase that is essential for cell wall elongation. This is Peptidoglycan glycosyltransferase MrdB from Escherichia coli O157:H7.